A 381-amino-acid chain; its full sequence is Probable 26S proteasome regulatory subunit rpn9 (381 aa).

Residues Q177 to S343 enclose the PCI domain.

Belongs to the proteasome subunit S11 family.

Acts as a regulatory subunit of the 26S proteasome which is involved in the ATP-dependent degradation of ubiquitinated proteins. In Schizosaccharomyces pombe (strain 972 / ATCC 24843) (Fission yeast), this protein is Probable 26S proteasome regulatory subunit rpn9 (rpn9).